A 165-amino-acid polypeptide reads, in one-letter code: Large ribosomal subunit protein uL10 (165 aa).

The protein belongs to the universal ribosomal protein uL10 family. In terms of assembly, part of the ribosomal stalk of the 50S ribosomal subunit. The N-terminus interacts with L11 and the large rRNA to form the base of the stalk. The C-terminus forms an elongated spine to which L12 dimers bind in a sequential fashion forming a multimeric L10(L12)X complex.

In terms of biological role, forms part of the ribosomal stalk, playing a central role in the interaction of the ribosome with GTP-bound translation factors. The chain is Large ribosomal subunit protein uL10 from Shewanella pealeana (strain ATCC 700345 / ANG-SQ1).